The chain runs to 226 residues: Choline transport system permease protein OpuBD (226 aa).

Residues 22–202 form the ABC transmembrane type-1 domain; it reads FGRHFLMSAY…VMAVGADLLM (181 aa). 5 consecutive transmembrane segments (helical) span residues 27–47, 52–72, 73–93, 148–168, and 182–202; these read LMSA…GILI, RLSA…ALAM, LAVL…SLFL, ALVI…GGLG, and AIIL…DLLM.

This sequence belongs to the binding-protein-dependent transport system permease family. CysTW subfamily.

It is found in the cell membrane. Functionally, involved in a high affinity multicomponent binding-protein-dependent transport system for choline; probably responsible for the translocation of the substrate across the membrane. The sequence is that of Choline transport system permease protein OpuBD (opuBD) from Bacillus subtilis (strain 168).